Reading from the N-terminus, the 359-residue chain is DNA integrity scanning protein DisA (359 aa).

In terms of domain architecture, DAC spans 7–146 (DEVLRQTLAI…NRRYVLEGSD (140 aa)). ATP-binding positions include G74, L92, and 105–109 (TRHRT).

It belongs to the DisA family. As to quaternary structure, homooctamer. It depends on Mg(2+) as a cofactor.

It carries out the reaction 2 ATP = 3',3'-c-di-AMP + 2 diphosphate. In terms of biological role, participates in a DNA-damage check-point. DisA forms globular foci that rapidly scan along the chromosomes searching for lesions. Also has diadenylate cyclase activity, catalyzing the condensation of 2 ATP molecules into cyclic di-AMP (c-di-AMP). c-di-AMP likely acts as a signaling molecule that may couple DNA integrity with a cellular process. This is DNA integrity scanning protein DisA from Kineococcus radiotolerans (strain ATCC BAA-149 / DSM 14245 / SRS30216).